We begin with the raw amino-acid sequence, 65 residues long: Conotoxin Lp5.1 (65 aa).

The first 22 residues, 1 to 22 (MRCVPVFIILLLLIPSAPSVDA), serve as a signal peptide directing secretion. Positions 23–50 (QRKTKDDVPLASFHDNAKRTLKRLWNKR) are excised as a propeptide.

Belongs to the conotoxin T superfamily. In terms of processing, contains 2 disulfide bonds that can be either 'C1-C3, C2-C4' or 'C1-C4, C2-C3', since these disulfide connectivities have been observed for conotoxins with cysteine framework V (for examples, see AC P0DQQ7 and AC P81755). In terms of tissue distribution, expressed by the venom duct.

The protein resides in the secreted. This Conus leopardus (Leopard cone) protein is Conotoxin Lp5.1.